The sequence spans 352 residues: C-C chemokine receptor type 5 (352 aa).

Residues 1–30 (MDYQVSSPIYDIDYGPSEPCRKIDVKQMGA) lie on the Extracellular side of the membrane. Position 3 is a sulfotyrosine (Tyr-3). O-linked (GalNAc...) serine glycosylation is found at Ser-6 and Ser-7. Sulfotyrosine occurs at positions 10 and 14. Intrachain disulfides connect Cys-20/Cys-269 and Cys-101/Cys-178. A helical membrane pass occupies residues 31–58 (QLLPPLYSLVFLFGFVGNMLVVLILINC). Residues 59–68 (KRLKSMTDIY) are Cytoplasmic-facing. The helical transmembrane segment at 69–89 (LLNLAISDLLFLFTIPFWAHY) threads the bilayer. Residues 90-102 (AAGQWDFGNTMCQ) are Extracellular-facing. The chain crosses the membrane as a helical span at residues 103–124 (FLTALYFIGFFSGIFFIILLTI). Residues 125–141 (DRYLAIVHAVFALKART) are Cytoplasmic-facing. A helical transmembrane segment spans residues 142–166 (VTFGVVTSVITWVVAVFASLPGIIF). The Extracellular portion of the chain corresponds to 167–198 (TRSQKEGYHYSCSPHFPFSQYRFWKNFETLKM). A helical transmembrane segment spans residues 199–218 (VILGLVLPLLVMVICYSGIL). At 219–235 (KTLLRCRNEKKRHRAVR) the chain is on the cytoplasmic side. Residues 236 to 260 (LIFTIMIVYFLFWAPYNIVLLINTY) traverse the membrane as a helical segment. At 261–277 (PDFFGVNNCNSSNRLDQ) the chain is on the extracellular side. The helical transmembrane segment at 278–301 (AMQVTETLGMTHCCVNPIIYAFVG) threads the bilayer. Over 302–352 (EKFRNYLVIFFQKHIAKRFCKCCSIFQKEAPERANSVYTRSTGEQEISVGL) the chain is Cytoplasmic. S-palmitoyl cysteine attachment occurs at residues Cys-321, Cys-323, and Cys-324. A phosphoserine; by BARK1 mark is found at Ser-337, Ser-342, and Ser-349.

The protein belongs to the G-protein coupled receptor 1 family. Interacts with PRAF2. Efficient ligand binding to CCL3/MIP-1alpha and CCL4/MIP-1beta requires sulfation, O-glycosylation and sialic acid modifications. Glycosylation on Ser-6 is required for efficient binding of CCL4. Interacts with GRK2. Interacts with ARRB1 and ARRB2. Interacts with CNIH4. Interacts with S100A4; this interaction stimulates T-lymphocyte chemotaxis. In terms of processing, sulfated on at least 2 of the N-terminal tyrosines. Sulfation is required for efficient binding of the chemokines, CCL3 and CCL4. Post-translationally, palmitoylation in the C-terminal is important for cell surface expression. Phosphorylation on serine residues in the C-terminal is stimulated by binding CC chemokines especially by APO-RANTES. In terms of processing, O-glycosylated, but not N-glycosylated. Ser-6 appears to be the major site even if Ser-7 may be also O-glycosylated. Also sialylated glycans present which contribute to chemokine binding. Ser-17 may also be glycosylated and, if so, with small moieties such as a T-antigen.

It localises to the cell membrane. In terms of biological role, receptor for a number of inflammatory CC-chemokines including CCL3/MIP-1-alpha, CCL4/MIP-1-beta and RANTES and subsequently transduces a signal by increasing the intracellular calcium ion level. May play a role in the control of granulocytic lineage proliferation or differentiation. Participates in T-lymphocyte migration to the infection site by acting as a chemotactic receptor. The protein is C-C chemokine receptor type 5 (CCR5) of Saimiri sciureus (Common squirrel monkey).